The chain runs to 218 residues: Ribose-5-phosphate isomerase A (218 aa).

Substrate is bound by residues 28-31 (TGST), 81-84 (DGAD), and 94-97 (KGGG). Glu-103 functions as the Proton acceptor in the catalytic mechanism. Lys-121 provides a ligand contact to substrate.

The protein belongs to the ribose 5-phosphate isomerase family. Homodimer.

It catalyses the reaction aldehydo-D-ribose 5-phosphate = D-ribulose 5-phosphate. It functions in the pathway carbohydrate degradation; pentose phosphate pathway; D-ribose 5-phosphate from D-ribulose 5-phosphate (non-oxidative stage): step 1/1. Its function is as follows. Catalyzes the reversible conversion of ribose-5-phosphate to ribulose 5-phosphate. In Thioalkalivibrio sulfidiphilus (strain HL-EbGR7), this protein is Ribose-5-phosphate isomerase A.